A 335-amino-acid polypeptide reads, in one-letter code: Holliday junction branch migration complex subunit RuvB (335 aa).

The large ATPase domain (RuvB-L) stretch occupies residues 1–183; the sequence is MDERIISSET…FGVIDHLEFY (183 aa). ATP is bound by residues L22, R23, G64, K67, T68, T69, 130 to 132, R173, Y183, and R220; that span reads EDY. T68 provides a ligand contact to Mg(2+). Residues 184–254 form a small ATPAse domain (RuvB-S) region; it reads TEEQLTEIVL…LAKEALTLLQ (71 aa). Positions 257–335 are head domain (RuvB-H); the sequence is PRGLDTIDQK…HLGISYEKEV (79 aa). Residues R293, R312, and R317 each coordinate DNA.

Belongs to the RuvB family. As to quaternary structure, homohexamer. Forms an RuvA(8)-RuvB(12)-Holliday junction (HJ) complex. HJ DNA is sandwiched between 2 RuvA tetramers; dsDNA enters through RuvA and exits via RuvB. An RuvB hexamer assembles on each DNA strand where it exits the tetramer. Each RuvB hexamer is contacted by two RuvA subunits (via domain III) on 2 adjacent RuvB subunits; this complex drives branch migration. In the full resolvosome a probable DNA-RuvA(4)-RuvB(12)-RuvC(2) complex forms which resolves the HJ.

The protein resides in the cytoplasm. The catalysed reaction is ATP + H2O = ADP + phosphate + H(+). The RuvA-RuvB-RuvC complex processes Holliday junction (HJ) DNA during genetic recombination and DNA repair, while the RuvA-RuvB complex plays an important role in the rescue of blocked DNA replication forks via replication fork reversal (RFR). RuvA specifically binds to HJ cruciform DNA, conferring on it an open structure. The RuvB hexamer acts as an ATP-dependent pump, pulling dsDNA into and through the RuvAB complex. RuvB forms 2 homohexamers on either side of HJ DNA bound by 1 or 2 RuvA tetramers; 4 subunits per hexamer contact DNA at a time. Coordinated motions by a converter formed by DNA-disengaged RuvB subunits stimulates ATP hydrolysis and nucleotide exchange. Immobilization of the converter enables RuvB to convert the ATP-contained energy into a lever motion, pulling 2 nucleotides of DNA out of the RuvA tetramer per ATP hydrolyzed, thus driving DNA branch migration. The RuvB motors rotate together with the DNA substrate, which together with the progressing nucleotide cycle form the mechanistic basis for DNA recombination by continuous HJ branch migration. Branch migration allows RuvC to scan DNA until it finds its consensus sequence, where it cleaves and resolves cruciform DNA. The chain is Holliday junction branch migration complex subunit RuvB from Listeria monocytogenes serovar 1/2a (strain ATCC BAA-679 / EGD-e).